A 638-amino-acid chain; its full sequence is 1-deoxy-D-xylulose-5-phosphate synthase (638 aa).

Residues His75 and Ala116–Ser118 contribute to the thiamine diphosphate site. Position 147 (Asp147) interacts with Mg(2+). Thiamine diphosphate-binding positions include Gly148–Ala149, Asn177, Tyr288, and Glu370. Asn177 contributes to the Mg(2+) binding site.

Belongs to the transketolase family. DXPS subfamily. As to quaternary structure, homodimer. Mg(2+) is required as a cofactor. It depends on thiamine diphosphate as a cofactor.

The enzyme catalyses D-glyceraldehyde 3-phosphate + pyruvate + H(+) = 1-deoxy-D-xylulose 5-phosphate + CO2. The protein operates within metabolic intermediate biosynthesis; 1-deoxy-D-xylulose 5-phosphate biosynthesis; 1-deoxy-D-xylulose 5-phosphate from D-glyceraldehyde 3-phosphate and pyruvate: step 1/1. Catalyzes the acyloin condensation reaction between C atoms 2 and 3 of pyruvate and glyceraldehyde 3-phosphate to yield 1-deoxy-D-xylulose-5-phosphate (DXP). This Cupriavidus pinatubonensis (strain JMP 134 / LMG 1197) (Cupriavidus necator (strain JMP 134)) protein is 1-deoxy-D-xylulose-5-phosphate synthase.